The primary structure comprises 260 residues: Eukaryotic translation initiation factor 3 subunit G-2 (260 aa).

In terms of domain architecture, RRM spans 180–258 (CAVRISNLSE…LILSVEWSKP (79 aa)).

This sequence belongs to the eIF-3 subunit G family. In terms of assembly, component of the eukaryotic translation initiation factor 3 (eIF-3) complex. The eIF-3 complex interacts with pix.

It localises to the cytoplasm. Functionally, RNA-binding component of the eukaryotic translation initiation factor 3 (eIF-3) complex, which is involved in protein synthesis of a specialized repertoire of mRNAs and, together with other initiation factors, stimulates binding of mRNA and methionyl-tRNAi to the 40S ribosome. The eIF-3 complex specifically targets and initiates translation of a subset of mRNAs involved in cell proliferation. This subunit can bind 18S rRNA. This is Eukaryotic translation initiation factor 3 subunit G-2 from Drosophila grimshawi (Hawaiian fruit fly).